The chain runs to 184 residues: Lactoylglutathione lyase (184 aa).

Alanine 2 is modified (N-acetylalanine). Cysteine 19 and cysteine 20 form a disulfide bridge. The 147-residue stretch at 31-177 (LLQQTMLRVK…DGYWIEILNP (147 aa)) folds into the VOC domain. Substrate contacts are provided by glutamine 34 and arginine 38. Zn(2+) is bound at residue glutamine 34. Residues cysteine 61 and cysteine 139 are joined by a disulfide bond. Lysine 88 bears the N6-succinyllysine mark. Glutamate 100 contacts Zn(2+). Asparagine 104 lines the substrate pocket. Phosphothreonine is present on threonine 107. Residues arginine 123 and histidine 127 each contribute to the substrate site. A Zn(2+)-binding site is contributed by histidine 127. At cysteine 139 the chain carries S-glutathionyl cysteine; alternate. Lysine 148 is subject to N6-acetyllysine; alternate. Lysine 148 bears the N6-succinyllysine; alternate mark. 157–158 (KM) lines the substrate pocket. Glutamate 173 provides a ligand contact to Zn(2+). Residue glutamate 173 is the Proton donor/acceptor of the active site.

It belongs to the glyoxalase I family. As to quaternary structure, homodimer. The cofactor is Zn(2+). Post-translationally, glutathionylation at Cys-139 inhibits enzyme activity. In terms of processing, phosphorylated at Thr-107 in the presence of CaMK2. However, this is a consensus site for phosphorylation by CK2 so phosphorylation may be mediated by CK2 rather than CaMK2. Phosphorylation is induced by TNF and suppresses the TNF-induced transcriptional activity of NF-kappa-B. Exists in a nitric oxide (NO)-modified form. The exact nature of the modification is unknown, but it suppresses the TNF-induced transcriptional activity of NF-kappa-B.

The catalysed reaction is (R)-S-lactoylglutathione = methylglyoxal + glutathione. It functions in the pathway secondary metabolite metabolism; methylglyoxal degradation; (R)-lactate from methylglyoxal: step 1/2. With respect to regulation, regulated by oxidation of Cys-139 in response to the redox state of the cell. Results in the alternative formation of cystine or glutathione-bound cysteine, the latter modification leading to reduced enzyme activity. Functionally, catalyzes the conversion of hemimercaptal, formed from methylglyoxal and glutathione, to S-lactoylglutathione. Involved in the regulation of TNF-induced transcriptional activity of NF-kappa-B. Required for normal osteoclastogenesis. This chain is Lactoylglutathione lyase (GLO1), found in Homo sapiens (Human).